We begin with the raw amino-acid sequence, 131 residues long: Methylglyoxal synthase (131 aa).

An MGS-like domain is found at 1–131 (MKIALIAHDK…GDLDYRKLRK (131 aa)). Substrate-binding positions include H8, K12, 34 to 37 (TGTT), and 54 to 55 (SG). The active-site Proton donor/acceptor is D60. Residue H87 participates in substrate binding.

The protein belongs to the methylglyoxal synthase family.

The catalysed reaction is dihydroxyacetone phosphate = methylglyoxal + phosphate. In terms of biological role, catalyzes the formation of methylglyoxal from dihydroxyacetone phosphate. This is Methylglyoxal synthase from Bacillus cereus (strain AH820).